The following is a 112-amino-acid chain: Macrodomain Ori protein (112 aa).

Residues 91–112 (FHTLSGGKPQVEGAEDYTEADD) are disordered. Positions 103-112 (GAEDYTEADD) are enriched in acidic residues.

The protein belongs to the MaoP family.

Involved in the organization of the Ori region of the chromosome into a macrodomain (MD). It constrains DNA mobility in the Ori macrodomain and limits long-distance DNA interactions with other chromosomal regions. This is Macrodomain Ori protein from Salmonella choleraesuis (strain SC-B67).